We begin with the raw amino-acid sequence, 473 residues long: B box and SPRY domain-containing protein (473 aa).

The interval 1 to 69 is disordered; the sequence is MSADVSGTES…PKQGSERSQL (69 aa). Over residues 35-51 the composition is skewed to pro residues; the sequence is KPGPGPEPRPESGPEPG. The B box-type zinc finger occupies 65–113; that stretch reads ERSQLCPEHFEPLSWFCLSERRPVCATCAGFGGRCHRHRIRRAEEHAEE. Residues 259–455 enclose the B30.2/SPRY domain; it reads SPLLTQLWAA…ISIVRGPLAT (197 aa).

As to quaternary structure, interacts with YWHAZ/14-3-3 protein zeta. Interacts with TRPV5 and TRPV6. As to expression, according to PubMed:10978534, testis-specific. According to PubMed:16371431, broadly expressed.

Its subcellular location is the cytoplasm. It localises to the membrane. In terms of biological role, may regulate epithelial calcium transport by inhibiting TRPV5 activity. The protein is B box and SPRY domain-containing protein (Bspry) of Mus musculus (Mouse).